The following is a 127-amino-acid chain: Small ribosomal subunit protein uS11 (127 aa).

This sequence belongs to the universal ribosomal protein uS11 family. In terms of assembly, part of the 30S ribosomal subunit. Interacts with proteins S7 and S18. Binds to IF-3.

In terms of biological role, located on the platform of the 30S subunit, it bridges several disparate RNA helices of the 16S rRNA. Forms part of the Shine-Dalgarno cleft in the 70S ribosome. This Rickettsia rickettsii (strain Iowa) protein is Small ribosomal subunit protein uS11.